Here is a 227-residue protein sequence, read N- to C-terminus: Transcriptional regulatory protein TdiR (227 aa).

The Response regulatory domain maps to 11–125; the sequence is TVFVVDDEAS…DLLDAVNAAL (115 aa). Position 60 is a 4-aspartylphosphate (D60). Residues 141-206 form the HTH luxR-type domain; it reads HLDLLATLSQ…DLMHFVMRGS (66 aa). The segment at residues 165-184 is a DNA-binding region (H-T-H motif); it reads SKEIAKLLGISYKTVEAHRG.

Post-translationally, phosphorylated by TdiS.

Member of the two-component regulatory system TdiR/TdiS, which probably regulates transcription of toluene catabolic genes (bss operon). Binds to DNA. The sequence is that of Transcriptional regulatory protein TdiR (tdiR) from Thauera aromatica.